A 428-amino-acid chain; its full sequence is Enolase (428 aa).

Gln163 contacts (2R)-2-phosphoglycerate. Glu205 serves as the catalytic Proton donor. Mg(2+)-binding residues include Asp242, Glu286, and Asp313. (2R)-2-phosphoglycerate contacts are provided by Lys338, Arg367, Ser368, and Lys389. Residue Lys338 is the Proton acceptor of the active site.

The protein belongs to the enolase family. Mg(2+) serves as cofactor.

Its subcellular location is the cytoplasm. It is found in the secreted. It localises to the cell surface. It catalyses the reaction (2R)-2-phosphoglycerate = phosphoenolpyruvate + H2O. It participates in carbohydrate degradation; glycolysis; pyruvate from D-glyceraldehyde 3-phosphate: step 4/5. In terms of biological role, catalyzes the reversible conversion of 2-phosphoglycerate (2-PG) into phosphoenolpyruvate (PEP). It is essential for the degradation of carbohydrates via glycolysis. The polypeptide is Enolase (Bordetella avium (strain 197N)).